Here is a 921-residue protein sequence, read N- to C-terminus: Isoleucine--tRNA ligase (921 aa).

Residues 59-69 (PYANGHLHIGH) carry the 'HIGH' region motif. Glu569 lines the L-isoleucyl-5'-AMP pocket. The 'KMSKS' region motif lies at 610 to 614 (KMSKS). Residue Lys613 participates in ATP binding. Zn(2+) is bound by residues Cys894, Cys897, Cys909, and Cys912.

This sequence belongs to the class-I aminoacyl-tRNA synthetase family. IleS type 1 subfamily. In terms of assembly, monomer. The cofactor is Zn(2+).

Its subcellular location is the cytoplasm. The enzyme catalyses tRNA(Ile) + L-isoleucine + ATP = L-isoleucyl-tRNA(Ile) + AMP + diphosphate. In terms of biological role, catalyzes the attachment of isoleucine to tRNA(Ile). As IleRS can inadvertently accommodate and process structurally similar amino acids such as valine, to avoid such errors it has two additional distinct tRNA(Ile)-dependent editing activities. One activity is designated as 'pretransfer' editing and involves the hydrolysis of activated Val-AMP. The other activity is designated 'posttransfer' editing and involves deacylation of mischarged Val-tRNA(Ile). The chain is Isoleucine--tRNA ligase from Campylobacter lari (strain RM2100 / D67 / ATCC BAA-1060).